A 214-amino-acid polypeptide reads, in one-letter code: A-type ATP synthase subunit D (214 aa).

Belongs to the V-ATPase D subunit family. As to quaternary structure, has multiple subunits with at least A(3), B(3), C, D, E, F, H, I and proteolipid K(x).

The protein resides in the cell membrane. Functionally, component of the A-type ATP synthase that produces ATP from ADP in the presence of a proton gradient across the membrane. This is A-type ATP synthase subunit D from Thermococcus gammatolerans (strain DSM 15229 / JCM 11827 / EJ3).